The chain runs to 218 residues: Akirin (218 aa).

The tract at residues 96 to 150 is disordered; it reads KAIPRSNDFDDDGDQRGDGCSSNYSKAYRAPSSPKSGSDSEGEAPSTSVTDRSSA. Positions 128–147 are enriched in polar residues; that stretch reads SPKSGSDSEGEAPSTSVTDR.

This sequence belongs to the akirin family. As to quaternary structure, interacts with hda-1, a component of the NuRD complex. Interacts with let-418, a component of the NuRD and MEC complexes. Interacts with the transcription factor ceh-18. Interacts with ima-2. As to expression, localizes to somatic tissues throughout the body, including muscle cells. Expressed in lateral epithelial seam cells, the hyp7 epidermal syncytium, and multiple head and tail neurons.

It localises to the nucleus. In terms of biological role, molecular adapter that acts as a bridge between a variety of multiprotein complexes, and which is involved in antifungal innate immunity, development of the muscle and sister chromatid cohesion. Plays a role in antifungal innate immunity by acting as a bridge between components of the NuRD (Nucleosome Remodeling and Deacetylase) and MEC chromatin remodeling complexes. NuRD and MEC complexes bind to the promoters of antimicrobial peptide genes and may recruit other proteins such as ceh-18 to control gene expression in response to fungal infection. During meiotic prophase I, plays a role in the disassembly of synaptonemal complex proteins and in the regulation of chromosome condensation and segregation. Together with nuclear import receptor ima-2, required for the import and load of cohesin complex proteins in meiotic nuclei, possibly by acting as a bridge between ima-2 and cohesins. Required for embryonic development of muscle tissue. This Caenorhabditis elegans protein is Akirin.